The primary structure comprises 377 residues: Transmembrane 6 superfamily member 2 (377 aa).

Helical transmembrane passes span 10 to 30 (IAAL…VSAL), 34 to 54 (LWVA…VYSL), 63 to 83 (PLYA…IIAL), 111 to 131 (FICY…AGAI), 140 to 160 (FGLY…TGNI), 170 to 190 (PAFF…MKVF), 219 to 239 (LALV…GLVV), 269 to 289 (MLMY…ALTF), and 332 to 352 (TWGC…LLAY). 2 EXPERA domains span residues 61 to 186 (YDPL…CWAG) and 217 to 351 (ADLA…HLLA).

Belongs to the TM6SF family. Substantial expression in liver and intestine, whereas all other tissues analyzed show low levels.

The protein resides in the endoplasmic reticulum membrane. It localises to the endoplasmic reticulum-Golgi intermediate compartment membrane. Regulator of liver fat metabolism influencing triglyceride secretion and hepatic lipid droplet content. May function as sterol isomerase. This chain is Transmembrane 6 superfamily member 2 (TM6SF2), found in Homo sapiens (Human).